The chain runs to 162 residues: Transcription antitermination protein RfaH (162 aa).

Belongs to the RfaH family. As to quaternary structure, interacts with both the nontemplate DNA and the RNA polymerase (RNAP).

Functionally, enhances distal genes transcription elongation in a specialized subset of operons that encode extracytoplasmic components. RfaH is recruited into a multi-component RNA polymerase complex by the ops element, which is a short conserved DNA sequence located downstream of the main promoter of these operons. Once bound, RfaH suppresses pausing and inhibits Rho-dependent and intrinsic termination at a subset of sites. Termination signals are bypassed, which allows complete synthesis of long RNA chains. Also negatively controls expression and surface presentation of AG43 and possibly another AG43-independent factor that mediates cell-cell interactions and biofilm formation,. The chain is Transcription antitermination protein RfaH from Escherichia coli O6:K15:H31 (strain 536 / UPEC).